The sequence spans 461 residues: Glycine--tRNA ligase (461 aa).

Substrate contacts are provided by arginine 99 and glutamate 173. Residues 205–207, 215–220, 289–290, and 333–336 each bind ATP; these read RNE, FRTREF, EL, and GADR. Residue 220–224 participates in substrate binding; it reads FEQME. 329 to 333 contributes to the substrate binding site; the sequence is EPSLG.

It belongs to the class-II aminoacyl-tRNA synthetase family. As to quaternary structure, homodimer.

It is found in the cytoplasm. The catalysed reaction is tRNA(Gly) + glycine + ATP = glycyl-tRNA(Gly) + AMP + diphosphate. In terms of biological role, catalyzes the attachment of glycine to tRNA(Gly). The polypeptide is Glycine--tRNA ligase (Lysinibacillus sphaericus (strain C3-41)).